A 491-amino-acid chain; its full sequence is ATP-dependent protease ATPase subunit HslU (491 aa).

ATP-binding positions include isoleucine 34, 76–81 (GVGKTE), aspartate 296, glutamate 364, and arginine 436.

This sequence belongs to the ClpX chaperone family. HslU subfamily. A double ring-shaped homohexamer of HslV is capped on each side by a ring-shaped HslU homohexamer. The assembly of the HslU/HslV complex is dependent on binding of ATP.

The protein localises to the cytoplasm. Its function is as follows. ATPase subunit of a proteasome-like degradation complex; this subunit has chaperone activity. The binding of ATP and its subsequent hydrolysis by HslU are essential for unfolding of protein substrates subsequently hydrolyzed by HslV. HslU recognizes the N-terminal part of its protein substrates and unfolds these before they are guided to HslV for hydrolysis. This Chlorobaculum tepidum (strain ATCC 49652 / DSM 12025 / NBRC 103806 / TLS) (Chlorobium tepidum) protein is ATP-dependent protease ATPase subunit HslU.